A 384-amino-acid chain; its full sequence is DNA dC-&gt;dU-editing enzyme APOBEC-3G (384 aa).

Residues 1–60 (MKPHFRNTVERMYRDTFSYNFYNRPILSRRNTVWLCYEVKTKGPSRPPLDAKIFRGQVYS) are essential for cytoplasmic localization. Positions 29-138 (RRNTVWLCYE…PDYQEALRSL (110 aa)) constitute a CMP/dCMP-type deaminase 1 domain. A Phosphothreonine; by PKA modification is found at Thr32. Residues Lys42, Lys52, and Lys63 each participate in a (Microbial infection) Glycyl lysine isopeptide (Lys-Gly) (interchain with G-Cter in ubiquitin) cross-link. His65, Cys97, and Cys100 together coordinate Zn(2+). (Microbial infection) Glycyl lysine isopeptide (Lys-Gly) (interchain with G-Cter in ubiquitin) cross-links involve residues Lys150 and Lys163. The segment at 209-336 (EPWVRGRHET…TLAEAGAKIS (128 aa)) is necessary for homooligomerization. The segment at 213-215 (RGR) is interaction with DNA. The 115-residue stretch at 214–328 (GRHETYLCYE…GRCQEGLRTL (115 aa)) folds into the CMP/dCMP-type deaminase 2 domain. Position 218 is a phosphothreonine; by PKA and CAMK2 (Thr218). Residue Lys249 forms a (Microbial infection) Glycyl lysine isopeptide (Lys-Gly) (interchain with G-Cter in ubiquitin) linkage. Residue His257 coordinates Zn(2+). The active-site Proton donor is Glu259. Lys270 participates in a covalent cross-link: (Microbial infection) Glycyl lysine isopeptide (Lys-Gly) (interchain with G-Cter in ubiquitin). Positions 288 and 291 each coordinate Zn(2+). (Microbial infection) Glycyl lysine isopeptide (Lys-Gly) (interchain with G-Cter in ubiquitin) cross-links involve residues Lys297, Lys301, and Lys303. The interaction with DNA stretch occupies residues 313–320 (RIYDDQGR). A (Microbial infection) Glycyl lysine isopeptide (Lys-Gly) (interchain with G-Cter in ubiquitin) cross-link involves residue Lys334.

Belongs to the cytidine and deoxycytidylate deaminase family. In terms of assembly, homodimer. Homooligomer. Can bind RNA to form ribonucleoprotein complexes of high-molecular-mass (HMM) or low-molecular-mass (LMM). HMM is inactive and heterogeneous in protein composition because of binding nonselectively to cellular RNAs, which in turn are associated with variety of cellular proteins. The LMM form which is enzymatically active has few or no RNAs associated. Its ability to form homooligomer is distinct from its ability to assemble into HMM. Interacts with APOBEC3B, APOBEC3F, MOV10, AGO2, EIF4E, EIF4ENIF1, DCP2 and DDX6 in an RNA-dependent manner. Interacts with AGO1, AGO3 and PKA/PRKACA. (Microbial infection) Interacts with HIV-1 Vif; promoting its ubiquitination by a cullin-5-RING E3 ubiquitin-protein ligase complex (ECS complex) hijacked by the HIV-1 Vif. As to quaternary structure, (Microbial infection) Interacts with HIV-1 reverse transcriptase/ribonuclease H. In terms of assembly, (Microbial infection) Interacts with hepatitis B virus capsid protein. It depends on Zn(2+) as a cofactor. (Microbial infection) Following infection by HIV-1, ubiquitinated by a cullin-5-RING E3 ubiquitin-protein ligase complex (ECS complex) hijacked by the HIV-1 Vif protein, leading to its degradation. Deubiquitinated by USP49; leading to stabilization. In terms of processing, phosphorylation at Thr-32 reduces its binding to HIV-1 Vif and subsequent ubiquitination and degradation thus promoting its antiviral activity. As to expression, expressed in spleen, testes, ovary and peripheral blood leukocytes and CD4+ lymphocytes. Also expressed in non-permissive peripheral blood mononuclear cells, and several tumor cell lines; no expression detected in permissive lymphoid and non-lymphoid cell lines. Exists only in the LMM form in peripheral blood-derived resting CD4 T-cells and monocytes, both of which are refractory to HIV-1 infection. LMM is converted to a HMM complex when resting CD4 T-cells are activated or when monocytes are induced to differentiate into macrophages. This change correlates with increased susceptibility of these cells to HIV-1 infection.

The protein localises to the cytoplasm. The protein resides in the nucleus. It is found in the P-body. It carries out the reaction a 2'-deoxycytidine in single-stranded DNA + H2O + H(+) = a 2'-deoxyuridine in single-stranded DNA + NH4(+). Its activity is regulated as follows. (Microbial infection) Antiviral activity is neutralized by the HIV-1 virion infectivity factor (Vif), that prevents its incorporation into progeny virions by both inhibiting its translation and/or by inducing its ubiquitination and subsequent degradation by the 26S proteasome. Can also be neutralized by simian immunodeficiency virus sooty mangabey monkey virus (SIV-sm) and chimpanzee immunodeficiency virus (SIV-cpz) Vif. Its function is as follows. DNA deaminase (cytidine deaminase) which acts as an inhibitor of retrovirus replication and retrotransposon mobility via deaminase-dependent and -independent mechanisms. Exhibits potent antiviral activity against Vif-deficient HIV-1. After the penetration of retroviral nucleocapsids into target cells of infection and the initiation of reverse transcription, it can induce the conversion of cytosine to uracil in the minus-sense single-strand viral DNA, leading to G-to-A hypermutations in the subsequent plus-strand viral DNA. The resultant detrimental levels of mutations in the proviral genome, along with a deamination-independent mechanism that works prior to the proviral integration, together exert efficient antiretroviral effects in infected target cells. Selectively targets single-stranded DNA and does not deaminate double-stranded DNA or single- or double-stranded RNA. Exhibits antiviral activity also against simian immunodeficiency viruses (SIVs), hepatitis B virus (HBV), equine infectious anemia virus (EIAV), xenotropic MuLV-related virus (XMRV) and simian foamy virus (SFV). May inhibit the mobility of LTR and non-LTR retrotransposons. This chain is DNA dC-&gt;dU-editing enzyme APOBEC-3G, found in Homo sapiens (Human).